A 390-amino-acid polypeptide reads, in one-letter code: GTPase Obg (390 aa).

The 159-residue stretch at Met-1–Leu-159 folds into the Obg domain. Residues Asn-127–Gly-147 are disordered. Residues Arg-129–Thr-145 are compositionally biased toward polar residues. The OBG-type G domain maps to Ala-160–Ile-333. GTP is bound by residues Gly-166 to Ser-173, Phe-191 to Val-195, Asp-213 to Gly-216, Asn-283 to Asp-286, and Ser-314 to Ala-316. 2 residues coordinate Mg(2+): Ser-173 and Thr-193.

The protein belongs to the TRAFAC class OBG-HflX-like GTPase superfamily. OBG GTPase family. In terms of assembly, monomer. It depends on Mg(2+) as a cofactor.

It is found in the cytoplasm. Its function is as follows. An essential GTPase which binds GTP, GDP and possibly (p)ppGpp with moderate affinity, with high nucleotide exchange rates and a fairly low GTP hydrolysis rate. Plays a role in control of the cell cycle, stress response, ribosome biogenesis and in those bacteria that undergo differentiation, in morphogenesis control. The sequence is that of GTPase Obg from Escherichia coli O157:H7.